Here is a 596-residue protein sequence, read N- to C-terminus: Uptake hydrogenase large subunit (596 aa).

The Ni(2+) site is built by C75, C78, C575, and C578.

This sequence belongs to the [NiFe]/[NiFeSe] hydrogenase large subunit family. In terms of assembly, heterodimer of a large and a small subunit. It depends on Ni(2+) as a cofactor.

The protein resides in the cell membrane. It carries out the reaction H2 + A = AH2. This enzyme recycles the H(2) produced by nitrogenase to increase the production of ATP and to protect nitrogenase against inhibition or damage by O(2) under carbon- or phosphate-limited conditions. This Rhizobium leguminosarum bv. viciae protein is Uptake hydrogenase large subunit (hupB).